A 792-amino-acid polypeptide reads, in one-letter code: Cadherin-11 (792 aa).

Residues 1 to 22 (MKEDNCLHAALICLGMLYYSHA) form the signal peptide. Positions 23-53 (ITTEKLNHVRPSLHGHHEKGKEGQVLHRSKR) are excised as a propeptide. Cadherin domains are found at residues 54–159 (GWVW…PPEF), 160–268 (LHEN…PPKF), 269–383 (PQSV…PPVF), 384–486 (LKPS…DNAP), and 487–608 (KFAA…YILN). The Extracellular segment spans residues 54-613 (GWVWNQFFVI…AYILNAGLST (560 aa)). Residues asparagine 455, asparagine 536, and asparagine 594 are each glycosylated (N-linked (GlcNAc...) asparagine). Residues 614–634 (GALIAILACIVILLVIVVLFV) form a helical membrane-spanning segment. Residues 635-792 (TLKRQKKEPL…GSKDTFDDDS (158 aa)) lie on the Cytoplasmic side of the membrane.

It localises to the cell membrane. Its function is as follows. Cadherins are calcium-dependent cell adhesion proteins. They preferentially interact with themselves in a homophilic manner in connecting cells; cadherins may thus contribute to the sorting of heterogeneous cell types. Required for proper focal adhesion assembly. Involved in the regulation of cell migration. The chain is Cadherin-11 (CDH11) from Gallus gallus (Chicken).